Here is a 218-residue protein sequence, read N- to C-terminus: Probable chemoreceptor glutamine deamidase CheD (218 aa).

This sequence belongs to the CheD family.

It catalyses the reaction L-glutaminyl-[protein] + H2O = L-glutamyl-[protein] + NH4(+). Functionally, probably deamidates glutamine residues to glutamate on methyl-accepting chemotaxis receptors (MCPs), playing an important role in chemotaxis. The protein is Probable chemoreceptor glutamine deamidase CheD of Saccharophagus degradans (strain 2-40 / ATCC 43961 / DSM 17024).